The following is a 377-amino-acid chain: Alanine racemase (377 aa).

Lysine 37 acts as the Proton acceptor; specific for D-alanine in catalysis. The residue at position 37 (lysine 37) is an N6-(pyridoxal phosphate)lysine. A substrate-binding site is contributed by arginine 135. Residue tyrosine 271 is the Proton acceptor; specific for L-alanine of the active site. Residue methionine 319 coordinates substrate.

Belongs to the alanine racemase family. It depends on pyridoxal 5'-phosphate as a cofactor.

The enzyme catalyses L-alanine = D-alanine. It functions in the pathway amino-acid biosynthesis; D-alanine biosynthesis; D-alanine from L-alanine: step 1/1. Catalyzes the interconversion of L-alanine and D-alanine. May also act on other amino acids. The protein is Alanine racemase (alr) of Helicobacter acinonychis (strain Sheeba).